A 214-amino-acid polypeptide reads, in one-letter code: N-(5'-phosphoribosyl)anthranilate isomerase (214 aa).

It belongs to the TrpF family.

It carries out the reaction N-(5-phospho-beta-D-ribosyl)anthranilate = 1-(2-carboxyphenylamino)-1-deoxy-D-ribulose 5-phosphate. Its pathway is amino-acid biosynthesis; L-tryptophan biosynthesis; L-tryptophan from chorismate: step 3/5. The protein is N-(5'-phosphoribosyl)anthranilate isomerase of Halorubrum lacusprofundi (strain ATCC 49239 / DSM 5036 / JCM 8891 / ACAM 34).